The primary structure comprises 289 residues: Ribosomal protein L11 methyltransferase (289 aa).

Threonine 134, glycine 155, aspartate 177, and asparagine 225 together coordinate S-adenosyl-L-methionine.

This sequence belongs to the methyltransferase superfamily. PrmA family.

The protein resides in the cytoplasm. It catalyses the reaction L-lysyl-[protein] + 3 S-adenosyl-L-methionine = N(6),N(6),N(6)-trimethyl-L-lysyl-[protein] + 3 S-adenosyl-L-homocysteine + 3 H(+). In terms of biological role, methylates ribosomal protein L11. The chain is Ribosomal protein L11 methyltransferase from Parasynechococcus marenigrum (strain WH8102).